Reading from the N-terminus, the 234-residue chain is BTB/POZ domain-containing protein KCTD5 (234 aa).

The residue at position 2 (alanine 2) is an N-acetylalanine. In terms of domain architecture, BTB spans 44–146; the sequence is KWVRLNVGGT…LVKDKIRERD (103 aa). Residues 213–234 form a disordered region; that stretch reads PYGTTSEPSEKAKILQERGSRM. The segment covering 220-234 has biased composition (basic and acidic residues); sequence PSEKAKILQERGSRM.

Homopentamer. Interacts (via C-terminus) with GRASP55/GORASP2. Interacts with CUL3 and with ubiquitinated proteins. Interacts with CRY1.

It is found in the cytoplasm. The protein localises to the cytosol. The protein resides in the nucleus. Functionally, its interaction with CUL3 suggests that it may act as a substrate adapter in some E3 ligase complex. Does not affect the function of Kv channel Kv2.1/KCNB1, Kv1.2/KCNA2, Kv4.2/KCND2 and Kv3.4/KCNC4. The protein is BTB/POZ domain-containing protein KCTD5 (Kctd5) of Mus musculus (Mouse).